Consider the following 261-residue polypeptide: Yop proteins translocation protein T (261 aa).

Transmembrane regions (helical) follow at residues 20–40, 44–64, 77–97, 131–151, 180–200, 214–234, and 239–259; these read FMACFVILPVLSKQLLGGVLL, IVCSLALYVYPAVANQPYIEV, IILGLLIGFVATIPFWALESA, TLITIFFSGGAFLSLLSALFH, ILLIAAVLAAPLLIAMFLAEF, VFVLAMPIKSAIASLLLVIYC, and SHASKAMLLVMDPISLLIPVL.

Belongs to the FliR/MopE/SpaR family.

It localises to the cell membrane. Component of the yop secretion machinery. The sequence is that of Yop proteins translocation protein T (yscT) from Yersinia pestis.